Reading from the N-terminus, the 119-residue chain is Putative membrane protein insertion efficiency factor (119 aa).

This sequence belongs to the UPF0161 family.

The protein resides in the cell inner membrane. Functionally, could be involved in insertion of integral membrane proteins into the membrane. The sequence is that of Putative membrane protein insertion efficiency factor from Agrobacterium fabrum (strain C58 / ATCC 33970) (Agrobacterium tumefaciens (strain C58)).